Reading from the N-terminus, the 439-residue chain is MAMLSDTIYALSSGAPPSGVSVVRVSGPLTRDILVKLVGSVPAARHVSHRTIRTRNNQPIDSGLVLFFPAPNSFTGEDVAELQIHGSRAVLAALFHALGDIPGVRMAVEGEFSRRAFENGKLDLVEVEGLADLIGAETEMQRRLAVEHSAGGLSAIYDSWAERLTRARALVEAELDFPEEDDVPGSVSDAVWADMAKLRSDIGDHLAAASAGEIIRDGFKVVIAGAPNAGKSSLLNALARRDVAIVTEIAGTTRDVLQVDLDIDGYLIKLFDTAGLREADDKVEMEGVRRARVALRDADLVLLLVDMTKPLIPDDLEQSSPHVTVGTKKDLTEVNSGRYDLQISTATGDGLPELRRLIGDIVERRFAGLSMAIPSRQRHKDSLAKCLAALDVALSQTDVNLELRTEQLRIAAEYLGRITGRVDVEQLLGVIFSEFCIGK.

The (6S)-5-formyl-5,6,7,8-tetrahydrofolate site is built by R24, E81, and K121. The TrmE-type G domain maps to 218–363; that stretch reads GFKVVIAGAP…LRRLIGDIVE (146 aa). Residue N228 coordinates K(+). GTP is bound by residues 228–233, 247–253, and 272–275; these read NAGKSS, TEIAGTT, and DTAG. A Mg(2+)-binding site is contributed by S232. Residues T247, I249, and T252 each coordinate K(+). A Mg(2+)-binding site is contributed by T253. Residue K439 participates in (6S)-5-formyl-5,6,7,8-tetrahydrofolate binding.

This sequence belongs to the TRAFAC class TrmE-Era-EngA-EngB-Septin-like GTPase superfamily. TrmE GTPase family. In terms of assembly, homodimer. Heterotetramer of two MnmE and two MnmG subunits. The cofactor is K(+).

The protein localises to the cytoplasm. In terms of biological role, exhibits a very high intrinsic GTPase hydrolysis rate. Involved in the addition of a carboxymethylaminomethyl (cmnm) group at the wobble position (U34) of certain tRNAs, forming tRNA-cmnm(5)s(2)U34. This is tRNA modification GTPase MnmE from Rhizobium johnstonii (strain DSM 114642 / LMG 32736 / 3841) (Rhizobium leguminosarum bv. viciae).